The sequence spans 85 residues: Phosphocarrier protein HPr (85 aa).

Residues 1–85 (MFQQEVTITA…HLVKLMAELE (85 aa)) enclose the HPr domain. Catalysis depends on histidine 15, which acts as the Pros-phosphohistidine intermediate.

The protein localises to the cytoplasm. General (non sugar-specific) component of the phosphoenolpyruvate-dependent sugar phosphotransferase system (sugar PTS). This major carbohydrate active-transport system catalyzes the phosphorylation of incoming sugar substrates concomitantly with their translocation across the cell membrane. The phosphoryl group from phosphoenolpyruvate (PEP) is transferred to the phosphoryl carrier protein HPr by enzyme I. Phospho-HPr then transfers it to the PTS EIIA domain. The polypeptide is Phosphocarrier protein HPr (ptsH) (Klebsiella pneumoniae).